The following is a 298-amino-acid chain: ADP/ATP translocase 3 (298 aa).

Methionine 1 is subject to N-acetylmethionine. Residues 1-7 (MTEQAIS) are Mitochondrial intermembrane-facing. Threonine 2 is modified (N-acetylthreonine; in ADP/ATP translocase 3, N-terminally processed). The stretch at 6-98 (ISFAKDFLAG…FAFKDKYKQI (93 aa)) is one Solcar 1 repeat. Residues 8–37 (FAKDFLAGGIAAAISKTAVAPIERVKLLLQ) traverse the membrane as a helical segment. Topologically, residues 38-74 (VQHASKQIAADKQYKGIVDCIVRIPKEQGVLSFWRGN) are mitochondrial matrix. Residue lysine 52 is modified to N6,N6,N6-trimethyllysine. Residues 75-99 (LANVIRYFPTQALNFAFKDKYKQIF) form a helical membrane-spanning segment. Residues arginine 80 and lysine 92 each contribute to the ADP site. The Mitochondrial intermembrane segment spans residues 100 to 109 (LGGVDKRTQF). The residue at position 105 (lysine 105) is an N6-acetyllysine. Residues 110–130 (WRYFAGNLASGGAAGATSLCF) traverse the membrane as a helical segment. Solcar repeat units follow at residues 111–201 (RYFA…AKGM) and 212–297 (VSWM…LKKV). Over 131-178 (VYPLDFARTRLAADVGKSGSEREFRGLGDCLVKITKSDGIRGLYQGFN) the chain is Mitochondrial matrix. Residues 179–199 (VSVQGIIIYRAAYFGIYDTAK) form a helical membrane-spanning segment. The Mitochondrial intermembrane segment spans residues 200–210 (GMLPDPKNTHI). Residues 211–231 (VVSWMIAQTVTAVAGVVSYPF) traverse the membrane as a helical segment. The Mitochondrial matrix portion of the chain corresponds to 232–273 (DTVRRRMMMQSGRKGADIMYKGTVDCWRKILKDEGGKAFFKG). Arginine 235 is an ADP binding site. Residues 235–240 (RRRMMM) are important for transport activity. Positions 235–240 (RRRMMM) match the Nucleotide carrier signature motif motif. Lysine 268 is subject to N6-acetyllysine. Residues 274 to 291 (AWSNVLRGMGGAFVLVLY) form a helical membrane-spanning segment. The Mitochondrial intermembrane segment spans residues 292 to 298 (DELKKVI).

The protein belongs to the mitochondrial carrier (TC 2.A.29) family. As to quaternary structure, monomer. Found in a complex with ARL2, ARL2BP and SLC25A6/ANT3. Post-translationally, trimethylated by ANTKMT at Lys-52.

It localises to the mitochondrion inner membrane. The protein resides in the membrane. The catalysed reaction is ADP(in) + ATP(out) = ADP(out) + ATP(in). The enzyme catalyses H(+)(in) = H(+)(out). Its activity is regulated as follows. The matrix-open state (m-state) is inhibited by the membrane-permeable bongkrekic acid (BKA). The cytoplasmic-open state (c-state) is inhibited by the membrane-impermeable toxic inhibitor carboxyatractyloside (CATR). Proton transporter activity is inhibited by ADP:ATP antiporter activity. Functionally, ADP:ATP antiporter that mediates import of ADP into the mitochondrial matrix for ATP synthesis, and export of ATP out to fuel the cell. Cycles between the cytoplasmic-open state (c-state) and the matrix-open state (m-state): operates by the alternating access mechanism with a single substrate-binding site intermittently exposed to either the cytosolic (c-state) or matrix (m-state) side of the inner mitochondrial membrane. In addition to its ADP:ATP antiporter activity, also involved in mitochondrial uncoupling and mitochondrial permeability transition pore (mPTP) activity. Plays a role in mitochondrial uncoupling by acting as a proton transporter: proton transport uncouples the proton flows via the electron transport chain and ATP synthase to reduce the efficiency of ATP production and cause mitochondrial thermogenesis. Proton transporter activity is inhibited by ADP:ATP antiporter activity, suggesting that SLC25A6/ANT3 acts as a master regulator of mitochondrial energy output by maintaining a delicate balance between ATP production (ADP:ATP antiporter activity) and thermogenesis (proton transporter activity). Proton transporter activity requires free fatty acids as cofactor, but does not transport it. Also plays a key role in mPTP opening, a non-specific pore that enables free passage of the mitochondrial membranes to solutes of up to 1.5 kDa, and which contributes to cell death. It is however unclear if SLC25A6/ANT3 constitutes a pore-forming component of mPTP or regulates it. The protein is ADP/ATP translocase 3 of Bos taurus (Bovine).